A 142-amino-acid chain; its full sequence is Large ribosomal subunit protein uL22c (142 aa).

This sequence belongs to the universal ribosomal protein uL22 family. As to quaternary structure, part of the 50S ribosomal subunit.

Its subcellular location is the plastid. It is found in the chloroplast. This protein binds specifically to 23S rRNA. Its function is as follows. The globular domain of the protein is located near the polypeptide exit tunnel on the outside of the subunit, while an extended beta-hairpin is found that lines the wall of the exit tunnel in the center of the 70S ribosome. This Pinus thunbergii (Japanese black pine) protein is Large ribosomal subunit protein uL22c (rpl22).